The chain runs to 168 residues: Oleosin 18.2 kDa (168 aa).

At A2 the chain carries N-acetylalanine. A polar region spans residues 2–45 (AEVRDRNLPHQVQVHPQYRLDNTTGGGYGAKNYHSGPSTSQVLA). Transmembrane regions (helical) follow at residues 43-63 (VLAVLTLLPIGGTLLALAGLT), 76-96 (PLFIIFSPVLVPAAIAIAMAV), and 97-117 (TGFLSSGAFGLTGLSSLSYVL). The hydrophobic stretch occupies residues 46 to 117 (VLTLLPIGGT…TGLSSLSYVL (72 aa)).

This sequence belongs to the oleosin family.

The protein localises to the lipid droplet. The protein resides in the membrane. In terms of biological role, may have a structural role to stabilize the lipid body during desiccation of the seed by preventing coalescence of the oil. Probably interacts with both lipid and phospholipid moieties of lipid bodies. May also provide recognition signals for specific lipase anchorage in lipolysis during seedling growth. The chain is Oleosin 18.2 kDa (MATP6-A) from Gossypium hirsutum (Upland cotton).